Consider the following 423-residue polypeptide: Transcription factor bHLH14 (423 aa).

The interval 192–243 is disordered; the sequence is GKTTKHTNQTGSYPKPAVSDHSKSGNQQFGSERKRRRKLETTRVAAATKEKH. The region spanning 245-294 is the bHLH domain; the sequence is PAVLSHVEAEKQRREKLNHRFYALRAIVPKVSRMDKASLLSDAVSYIESL. The disordered stretch occupies residues 312 to 343; sequence ETDKLDNSSSNTSPSSVEYQVNQKPSKSNRGS. The segment covering 318–327 has biased composition (low complexity); it reads NSSSNTSPSS. The span at 328 to 342 shows a compositional bias: polar residues; sequence VEYQVNQKPSKSNRG.

In terms of assembly, homodimer.

The protein resides in the nucleus. In Arabidopsis thaliana (Mouse-ear cress), this protein is Transcription factor bHLH14 (BHLH14).